A 123-amino-acid chain; its full sequence is Ribosome-binding factor A (123 aa).

Belongs to the RbfA family. Monomer. Binds 30S ribosomal subunits, but not 50S ribosomal subunits or 70S ribosomes.

The protein resides in the cytoplasm. Functionally, one of several proteins that assist in the late maturation steps of the functional core of the 30S ribosomal subunit. Associates with free 30S ribosomal subunits (but not with 30S subunits that are part of 70S ribosomes or polysomes). Required for efficient processing of 16S rRNA. May interact with the 5'-terminal helix region of 16S rRNA. This is Ribosome-binding factor A from Legionella pneumophila (strain Paris).